We begin with the raw amino-acid sequence, 425 residues long: C2H2 type master regulator of conidiophore development brlA (425 aa).

3 disordered regions span residues 28 to 72 (MASS…RHTG), 232 to 257 (KTHSPTTPVRSCSLGTTSGTDTPMSR), and 281 to 301 (VQRQPSRKVARKQSSKQSLSL). Over residues 30–44 (SSFSPMESPTPTPTS) the composition is skewed to low complexity. Polar residues predominate over residues 232 to 256 (KTHSPTTPVRSCSLGTTSGTDTPMS). Over residues 285 to 294 (PSRKVARKQS) the composition is skewed to basic residues. 2 C2H2-type zinc fingers span residues 321 to 345 (KGRFKRQEHLKRHMKSHSKEKPHVC) and 351 to 376 (ERAFSRSDNLNAHYTKTHSKRGGRNR). Positions 365–374 (TKTHSKRGGR) are enriched in basic residues. A disordered region spans residues 365-425 (TKTHSKRGGR…RETSEEAWLE (61 aa)).

It localises to the nucleus. Its function is as follows. BrlA, abaA and wetA are pivotal regulators of conidiophore development and conidium maturation. They act individually and together to regulate their own expression and that of numerous other sporulation-specific genes. Binds promoters of target genes at brlA response elements (BREs) containing the conserved sequence 5'-(C/A)(A/G)AGGG(G/A)-3'. Also coordinates the expression of carbohydrate-active enzymes and of the key effectors of cell wall remodeling during autolysis. In Aspergillus niger (strain ATCC MYA-4892 / CBS 513.88 / FGSC A1513), this protein is C2H2 type master regulator of conidiophore development brlA.